The chain runs to 1358 residues: DNA-directed RNA polymerase subunit beta (1358 aa).

Belongs to the RNA polymerase beta chain family. The RNAP catalytic core consists of 2 alpha, 1 beta, 1 beta' and 1 omega subunit. When a sigma factor is associated with the core the holoenzyme is formed, which can initiate transcription.

It carries out the reaction RNA(n) + a ribonucleoside 5'-triphosphate = RNA(n+1) + diphosphate. In terms of biological role, DNA-dependent RNA polymerase catalyzes the transcription of DNA into RNA using the four ribonucleoside triphosphates as substrates. In Xanthobacter autotrophicus (strain ATCC BAA-1158 / Py2), this protein is DNA-directed RNA polymerase subunit beta.